The chain runs to 378 residues: 3-hydroxyisobutyryl-CoA hydrolase 1 (378 aa).

Alanine 2 carries the N-acetylalanine modification. Substrate contacts are provided by glutamate 94, glycine 119, glutamate 142, and aspartate 150.

It belongs to the enoyl-CoA hydratase/isomerase family. In terms of tissue distribution, expressed in roots, leaves, flowers and siliques.

It localises to the peroxisome. The catalysed reaction is 3-hydroxy-2-methylpropanoyl-CoA + H2O = 3-hydroxy-2-methylpropanoate + CoA + H(+). It functions in the pathway amino-acid degradation; L-valine degradation. Inhibited by copper. Its function is as follows. Involved in valine catabolism. May be indirectly involved in benzoic acid biosynthesis and in cold signaling and cold tolerance. The sequence is that of 3-hydroxyisobutyryl-CoA hydrolase 1 (CHY1) from Arabidopsis thaliana (Mouse-ear cress).